The chain runs to 56 residues: Large ribosomal subunit protein eL37 (56 aa).

Residues C19, C22, C34, and C37 each coordinate Zn(2+). Residues 19-37 (CRRCGSVSLNVHTKQCTSC) form a C4-type zinc finger.

It belongs to the eukaryotic ribosomal protein eL37 family. The cofactor is Zn(2+).

In terms of biological role, binds to the 23S rRNA. The chain is Large ribosomal subunit protein eL37 from Methanosarcina mazei (strain ATCC BAA-159 / DSM 3647 / Goe1 / Go1 / JCM 11833 / OCM 88) (Methanosarcina frisia).